The chain runs to 358 residues: Heme A synthase (358 aa).

8 helical membrane-spanning segments follow: residues 25–45 (LVRY…MVGG), 111–131 (LLAR…WLTG), 141–161 (MLGL…MVAS), 176–196 (IHLT…RGLV), 210–230 (FAGW…LVAG), 269–289 (VQFV…LHAV), 304–324 (TIVL…TLLM), and 326–346 (APLH…AFAV). Residue His273 participates in heme binding. His334 provides a ligand contact to heme.

This sequence belongs to the COX15/CtaA family. Type 2 subfamily. Interacts with CtaB. It depends on heme b as a cofactor.

It localises to the cell membrane. It catalyses the reaction Fe(II)-heme o + 2 A + H2O = Fe(II)-heme a + 2 AH2. The protein operates within porphyrin-containing compound metabolism; heme A biosynthesis; heme A from heme O: step 1/1. Catalyzes the conversion of heme O to heme A by two successive hydroxylations of the methyl group at C8. The first hydroxylation forms heme I, the second hydroxylation results in an unstable dihydroxymethyl group, which spontaneously dehydrates, resulting in the formyl group of heme A. In Brucella suis (strain ATCC 23445 / NCTC 10510), this protein is Heme A synthase.